The primary structure comprises 378 residues: Probable S-(hydroxymethyl)glutathione dehydrogenase 1 (378 aa).

C47 provides a ligand contact to Zn(2+). H48 provides a ligand contact to NAD(+). Residues H69, E70, C99, C102, C105, C113, and C176 each contribute to the Zn(2+) site. Residues 201–206 (GCGCVG), D225, 293–295 (IGV), and 318–320 (SAF) each bind NAD(+).

Belongs to the zinc-containing alcohol dehydrogenase family. Class-III subfamily. Zn(2+) is required as a cofactor.

The enzyme catalyses a primary alcohol + NAD(+) = an aldehyde + NADH + H(+). The catalysed reaction is a secondary alcohol + NAD(+) = a ketone + NADH + H(+). It catalyses the reaction S-(hydroxymethyl)glutathione + NADP(+) = S-formylglutathione + NADPH + H(+). It carries out the reaction S-(hydroxymethyl)glutathione + NAD(+) = S-formylglutathione + NADH + H(+). The enzyme catalyses S-nitrosoglutathione + NADH + H(+) = S-(hydroxysulfenamide)glutathione + NAD(+). Functionally, oxidizes long-chain alcohols and, in the presence of glutathione, is able to oxidize formaldehyde. Also acts as a S-nitroso-glutathione reductase by catalyzing the NADH-dependent reduction of S-nitrosoglutathione, thereby regulating protein S-nitrosylation. The protein is Probable S-(hydroxymethyl)glutathione dehydrogenase 1 of Schizosaccharomyces pombe (strain 972 / ATCC 24843) (Fission yeast).